A 381-amino-acid chain; its full sequence is 1-deoxy-D-xylulose 5-phosphate reductoisomerase (381 aa).

8 residues coordinate NADPH: Thr10, Gly11, Ser12, Ile13, Gly36, Lys37, Asn38, and Asn122. Lys123 contacts 1-deoxy-D-xylulose 5-phosphate. Position 124 (Glu124) interacts with NADPH. Asp148 serves as a coordination point for Mn(2+). 1-deoxy-D-xylulose 5-phosphate is bound by residues Ser149, Glu150, Ser173, and His196. Residue Glu150 coordinates Mn(2+). NADPH is bound at residue Gly202. Residues Ser209, Asn214, Lys215, and Glu218 each contribute to the 1-deoxy-D-xylulose 5-phosphate site. A Mn(2+)-binding site is contributed by Glu218.

Belongs to the DXR family. Mg(2+) is required as a cofactor. Requires Mn(2+) as cofactor.

The catalysed reaction is 2-C-methyl-D-erythritol 4-phosphate + NADP(+) = 1-deoxy-D-xylulose 5-phosphate + NADPH + H(+). The protein operates within isoprenoid biosynthesis; isopentenyl diphosphate biosynthesis via DXP pathway; isopentenyl diphosphate from 1-deoxy-D-xylulose 5-phosphate: step 1/6. Functionally, catalyzes the NADPH-dependent rearrangement and reduction of 1-deoxy-D-xylulose-5-phosphate (DXP) to 2-C-methyl-D-erythritol 4-phosphate (MEP). The sequence is that of 1-deoxy-D-xylulose 5-phosphate reductoisomerase from Desulfitobacterium hafniense (strain Y51).